Consider the following 455-residue polypeptide: MASTTGALILAAGKGTRMHSDKPKVLQTILGEPMLRFVMDALAPVFGDRVWTVVGHRADMIYAAFAGEDARFVVQEQQLGTGHALQMAWESLRAAGLDRVVVVNGDTPLLATETIDFFLKESAEADIAFMTLTLPDPGAYGRVVRHNGHVAAIVEAKDYDEALYGPEPSEINTGIYALRLDAVESLLPRLTNANRSGEYYITDLVGLAVAGRMNVLGIQCGEDPNLLGVNNPAELIRSEALLRTRLVIGHIEGGVLIHAPETVRISPRATIEPGAEIYGPCEIYGTSRIARGAVVHSHCWLRNAEVESGSEVKSFSHLEGATVGKGCSVGPFARLRPGAVLDEEARVGNFVEMKKARLHKGAKAGHLTYLGDADVGAGANIGAGTITCNYDGKNKHRTVIGAGAFIGSNTALVAPVTVGDGSLVGAGSVITKDVPEASLAIARGRQTNLPRKPKA.

Residues methionine 1–proline 232 form a pyrophosphorylase region. UDP-N-acetyl-alpha-D-glucosamine is bound by residues leucine 10–glycine 13, lysine 24, glutamine 75, and glycine 80–threonine 81. Residue aspartate 106 participates in Mg(2+) binding. UDP-N-acetyl-alpha-D-glucosamine contacts are provided by glycine 141, glutamate 155, asparagine 172, and asparagine 230. Residue asparagine 230 participates in Mg(2+) binding. Positions alanine 233–glycine 253 are linker. Residues glycine 254–alanine 455 are N-acetyltransferase. UDP-N-acetyl-alpha-D-glucosamine contacts are provided by arginine 336 and lysine 354. Residue histidine 366 is the Proton acceptor of the active site. UDP-N-acetyl-alpha-D-glucosamine contacts are provided by tyrosine 369 and asparagine 380. Acetyl-CoA-binding positions include alanine 383, asparagine 389–tyrosine 390, serine 408, alanine 426, and arginine 443.

The protein in the N-terminal section; belongs to the N-acetylglucosamine-1-phosphate uridyltransferase family. In the C-terminal section; belongs to the transferase hexapeptide repeat family. Homotrimer. Requires Mg(2+) as cofactor.

The protein localises to the cytoplasm. The enzyme catalyses alpha-D-glucosamine 1-phosphate + acetyl-CoA = N-acetyl-alpha-D-glucosamine 1-phosphate + CoA + H(+). The catalysed reaction is N-acetyl-alpha-D-glucosamine 1-phosphate + UTP + H(+) = UDP-N-acetyl-alpha-D-glucosamine + diphosphate. It functions in the pathway nucleotide-sugar biosynthesis; UDP-N-acetyl-alpha-D-glucosamine biosynthesis; N-acetyl-alpha-D-glucosamine 1-phosphate from alpha-D-glucosamine 6-phosphate (route II): step 2/2. The protein operates within nucleotide-sugar biosynthesis; UDP-N-acetyl-alpha-D-glucosamine biosynthesis; UDP-N-acetyl-alpha-D-glucosamine from N-acetyl-alpha-D-glucosamine 1-phosphate: step 1/1. Its pathway is bacterial outer membrane biogenesis; LPS lipid A biosynthesis. Its function is as follows. Catalyzes the last two sequential reactions in the de novo biosynthetic pathway for UDP-N-acetylglucosamine (UDP-GlcNAc). The C-terminal domain catalyzes the transfer of acetyl group from acetyl coenzyme A to glucosamine-1-phosphate (GlcN-1-P) to produce N-acetylglucosamine-1-phosphate (GlcNAc-1-P), which is converted into UDP-GlcNAc by the transfer of uridine 5-monophosphate (from uridine 5-triphosphate), a reaction catalyzed by the N-terminal domain. The protein is Bifunctional protein GlmU of Nitratidesulfovibrio vulgaris (strain DP4) (Desulfovibrio vulgaris).